The sequence spans 957 residues: Histone-lysine N-methyltransferase, H3 lysine-9 specific SUVH3 (957 aa).

The YDG domain occupies 73-243; it reads GHPPGVALGD…PQVCKFLMHG (171 aa). Positions 182 to 209 are disordered; it reads EAGGGEGGGGGEGGGGAKKGKGGKGGGK. Positions 183 to 198 are enriched in gly residues; it reads AGGGEGGGGGEGGGGA. Positions 319-441 constitute a Pre-SET domain; sequence DVSGGQEAVP…HECGDGCSAK (123 aa). The 466-residue stretch at 455–920 folds into the SET domain; sequence LPLEVFMTES…QLEELSYNYG (466 aa). Disordered regions lie at residues 552–595, 611–647, and 783–805; these read DAAR…GGAE, AAGT…SSGA, and PPAL…GGGG. Residues 560–578 show a composition bias toward low complexity; it reads QQPQQQQPQQQQQQPAAGG. The span at 793–805 shows a compositional bias: gly residues; it reads GNGGTTGSGGGGG. Residues 941 to 957 enclose the Post-SET domain; it reads FVMQCNCGAVGCIGNLM.

This sequence belongs to the class V-like SAM-binding methyltransferase superfamily. Histone-lysine methyltransferase family. Suvar3-9 subfamily.

It localises to the nucleus. Its subcellular location is the chromosome. It carries out the reaction L-lysyl(9)-[histone H3] + S-adenosyl-L-methionine = N(6)-methyl-L-lysyl(9)-[histone H3] + S-adenosyl-L-homocysteine + H(+). Functionally, histone methyltransferase. Monomethylates specifically 'Lys-9' of histone H3. H3 'Lys-9Me1' (H3K9me1) functions as an epigenetic mark of repressed chromatin. The protein is Histone-lysine N-methyltransferase, H3 lysine-9 specific SUVH3 (SUVH3) of Chlamydomonas reinhardtii (Chlamydomonas smithii).